The chain runs to 59 residues: Large ribosomal subunit protein uL30 (59 aa).

This sequence belongs to the universal ribosomal protein uL30 family. Part of the 50S ribosomal subunit.

In Staphylococcus aureus (strain JH1), this protein is Large ribosomal subunit protein uL30.